The chain runs to 352 residues: Aliphatic aldoxime dehydratase (352 aa).

Serine 219 contributes to the an aliphatic aldoxime binding site. Histidine 299 provides a ligand contact to heme b. Histidine 320 is a binding site for an aliphatic aldoxime. Histidine 320 is an active-site residue.

The protein belongs to the heme-containing dehydratase family. As to quaternary structure, homodimer. Requires heme b as cofactor. It depends on Ca(2+) as a cofactor.

The catalysed reaction is an aliphatic aldoxime = a nitrile + H2O. Its activity is regulated as follows. Active when the heme iron is in the ferrous state. Is very sensitive to AgNO(3), is also inhibited by hydroxylamine and phenylhydrazine, and hardly inhibited by thiol reagents. Not sensitive to chelating agents and serine-modifying reagents. Functionally, catalyzes the dehydration of aldoximes to their corresponding nitrile. Aliphatic aldoximes are more effective substrates than aromatic aldoximes. Shows high activity with butyraldoxime and acetaldoxime, but only weak activity with the aromatic aldoxime pyridine-2-aldoxime. Cannot use benzaldoxime, isonitrosoacetophenone and pyridine-4-aldoxime. Is involved in the metabolism of aldoxime in vivo. The sequence is that of Aliphatic aldoxime dehydratase from Pseudomonas chlororaphis (Pseudomonas aureofaciens).